A 125-amino-acid polypeptide reads, in one-letter code: Translation initiation factor 5A (125 aa).

Lys35 carries the hypusine modification.

The protein belongs to the eIF-5A family.

It is found in the cytoplasm. Functions by promoting the formation of the first peptide bond. In Methanosphaerula palustris (strain ATCC BAA-1556 / DSM 19958 / E1-9c), this protein is Translation initiation factor 5A (eIF5A).